Consider the following 233-residue polypeptide: V-type proton ATPase subunit E (233 aa).

It belongs to the V-ATPase E subunit family. As to quaternary structure, V-ATPase is a heteromultimeric enzyme composed of a peripheral catalytic V1 complex (components A to H) attached to an integral membrane V0 proton pore complex (components: a, c, c', c'' and d).

In terms of biological role, subunit of the peripheral V1 complex of vacuolar ATPase essential for assembly or catalytic function. V-ATPase is responsible for acidifying a variety of intracellular compartments in eukaryotic cells. This is V-type proton ATPase subunit E (vatE) from Dictyostelium discoideum (Social amoeba).